The sequence spans 486 residues: E3 ubiquitin-protein ligase RNF8 (486 aa).

One can recognise an FHA domain in the interval 38-92 (VTVGRGFGVTYQLVSKICPLMISRNHCVLKQNPEGQWTIMDNKSLNGVWLNRARL). The segment at 68–72 (QNPEG) is required for interaction with PIWIL1. Ser157 carries the post-translational modification Phosphoserine. Residues 180–201 (SCESGQSVKSQGKGEVSSTPSE) show a composition bias toward polar residues. The tract at residues 180 to 207 (SCESGQSVKSQGKGEVSSTPSENLDPKL) is disordered. The RING-type zinc finger occupies 404–442 (CIICSEYFIEAVTLNCAHSFCSYCINEWMKRKIECPICR).

Belongs to the RNF8 family. Homodimer. Forms a E2-E3 ubiquitin ligase complex composed of the RNF8 homodimer and a E2 heterodimer of UBE2N and UBE2V2. Interacts with class III E2s, including UBE2E1, UBE2E2, and UBE2E3 and with UBE2N. Interacts with RXRA. Interacts (via FHA domain) with phosphorylated HERC2 (via C-terminus). Interacts with PIWIL1; leading to sequester RNF8 in the cytoplasm. Interacts with WRAP53/TCAB1. Autoubiquitinated through 'Lys-48' and 'Lys-63' of ubiquitin. 'Lys-63' polyubiquitination is mediated by UBE2N. 'Lys-29'-type polyubiquitination is also observed, but it doesn't require its own functional RING-type zinc finger.

The protein localises to the nucleus. It is found in the cytoplasm. Its subcellular location is the midbody. It localises to the chromosome. The protein resides in the telomere. It carries out the reaction S-ubiquitinyl-[E2 ubiquitin-conjugating enzyme]-L-cysteine + [acceptor protein]-L-lysine = [E2 ubiquitin-conjugating enzyme]-L-cysteine + N(6)-ubiquitinyl-[acceptor protein]-L-lysine.. It participates in protein modification; protein ubiquitination. E3 ubiquitin-protein ligase that plays a key role in DNA damage signaling via 2 distinct roles: by mediating the 'Lys-63'-linked ubiquitination of histones H2A and H2AX and promoting the recruitment of DNA repair proteins at double-strand breaks (DSBs) sites, and by catalyzing 'Lys-48'-linked ubiquitination to remove target proteins from DNA damage sites. Following DNA DSBs, it is recruited to the sites of damage by ATM-phosphorylated MDC1 and catalyzes the 'Lys-63'-linked ubiquitination of histones H2A and H2AX, thereby promoting the formation of TP53BP1 and BRCA1 ionizing radiation-induced foci (IRIF). Also controls the recruitment of UIMC1-BRCC3 (RAP80-BRCC36) and PAXIP1/PTIP to DNA damage sites. Promotes the recruitment of NBN to DNA damage sites by catalyzing 'Lys-6'-linked ubiquitination of NBN. Also recruited at DNA interstrand cross-links (ICLs) sites and catalyzes 'Lys-63'-linked ubiquitination of histones H2A and H2AX, leading to recruitment of FAAP20 and Fanconi anemia (FA) complex, followed by interstrand cross-link repair. H2A ubiquitination also mediates the ATM-dependent transcriptional silencing at regions flanking DSBs in cis, a mechanism to avoid collision between transcription and repair intermediates. Promotes the formation of 'Lys-63'-linked polyubiquitin chains via interactions with the specific ubiquitin-conjugating UBE2N/UBC13 and ubiquitinates non-histone substrates such as PCNA. Substrates that are polyubiquitinated at 'Lys-63' are usually not targeted for degradation. Also catalyzes the formation of 'Lys-48'-linked polyubiquitin chains via interaction with the ubiquitin-conjugating UBE2L6/UBCH8, leading to degradation of substrate proteins such as CHEK2, JMJD2A/KDM4A and KU80/XRCC5: it is still unclear how the preference toward 'Lys-48'- versus 'Lys-63'-linked ubiquitination is regulated but it could be due to RNF8 ability to interact with specific E2 specific ligases. For instance, interaction with phosphorylated HERC2 promotes the association between RNF8 and UBE2N/UBC13 and favors the specific formation of 'Lys-63'-linked ubiquitin chains. Promotes non-homologous end joining (NHEJ) by promoting the 'Lys-48'-linked ubiquitination and degradation the of KU80/XRCC5. Following DNA damage, mediates the ubiquitination and degradation of JMJD2A/KDM4A in collaboration with RNF168, leading to unmask H4K20me2 mark and promote the recruitment of TP53BP1 at DNA damage sites. Following DNA damage, mediates the ubiquitination and degradation of POLD4/p12, a subunit of DNA polymerase delta. In the absence of POLD4, DNA polymerase delta complex exhibits higher proofreading activity. In addition to its function in damage signaling, also plays a role in higher-order chromatin structure by mediating extensive chromatin decondensation. Involved in the activation of ATM by promoting histone H2B ubiquitination, which indirectly triggers histone H4 'Lys-16' acetylation (H4K16ac), establishing a chromatin environment that promotes efficient activation of ATM kinase. Required in the testis, where it plays a role in the replacement of histones during spermatogenesis. At uncapped telomeres, promotes the joining of deprotected chromosome ends by inducing H2A ubiquitination and TP53BP1 recruitment, suggesting that it may enhance cancer development by aggravating telomere-induced genome instability in case of telomeric crisis. Promotes the assembly of RAD51 at DNA DSBs in the absence of BRCA1 and TP53BP1 Also involved in class switch recombination in immune system, via its role in regulation of DSBs repair. May be required for proper exit from mitosis after spindle checkpoint activation and may regulate cytokinesis. May play a role in the regulation of RXRA-mediated transcriptional activity. Not involved in RXRA ubiquitination by UBE2E2. The protein is E3 ubiquitin-protein ligase RNF8 of Pongo abelii (Sumatran orangutan).